We begin with the raw amino-acid sequence, 459 residues long: Mycothione reductase (459 aa).

Residue 31-39 (EQGTFGGTC) coordinates FAD. Cysteine 39 and cysteine 44 are joined by a disulfide. Catalysis depends on histidine 444, which acts as the Proton acceptor.

Belongs to the class-I pyridine nucleotide-disulfide oxidoreductase family. As to quaternary structure, homodimer. It depends on FAD as a cofactor.

It carries out the reaction 2 mycothiol + NADP(+) = mycothione + NADPH + H(+). The enzyme catalyses 2 mycothiol + NAD(+) = mycothione + NADH + H(+). Functionally, catalyzes the NAD(P)H-dependent reduction of mycothione (the oxidized disulfide form of mycothiol) to mycothiol. This chain is Mycothione reductase (mtr), found in Mycobacterium tuberculosis (strain CDC 1551 / Oshkosh).